The chain runs to 263 residues: Uracil-DNA glycosylase (263 aa).

Asp-94 serves as the catalytic Proton acceptor.

This sequence belongs to the uracil-DNA glycosylase (UDG) superfamily. UNG family.

Its subcellular location is the cytoplasm. The enzyme catalyses Hydrolyzes single-stranded DNA or mismatched double-stranded DNA and polynucleotides, releasing free uracil.. In terms of biological role, excises uracil residues from the DNA which can arise as a result of misincorporation of dUMP residues by DNA polymerase or due to deamination of cytosine. This is Uracil-DNA glycosylase from Ralstonia pickettii (strain 12J).